We begin with the raw amino-acid sequence, 292 residues long: Protein rogdi homolog (292 aa).

Residues 1–12 (MEVQSLTITTNY) show a composition bias toward polar residues. The interval 1–25 (MEVQSLTITTNYPPKPASPNPQDIR) is disordered.

Belongs to the rogdi family.

The protein resides in the nucleus envelope. The protein is Protein rogdi homolog of Caenorhabditis elegans.